A 176-amino-acid polypeptide reads, in one-letter code: Large ribosomal subunit protein uL30 (176 aa).

Belongs to the universal ribosomal protein uL30 family. As to quaternary structure, part of the 50S ribosomal subunit.

The polypeptide is Large ribosomal subunit protein uL30 (Pyrobaculum arsenaticum (strain DSM 13514 / JCM 11321 / PZ6)).